The chain runs to 391 residues: Probable sugar efflux transporter (391 aa).

Transmembrane regions (helical) follow at residues 16-36 (VFVF…PVAL), 51-71 (VGLM…PLML), 82-102 (LLFL…AWNF), 103-123 (WVLL…WSIT), 138-158 (QALG…LPLG), 171-191 (FGVI…LLPP), 210-230 (PLLM…FTTY), 247-267 (ITTL…FLFG), 277-297 (FIAF…VFKN), 300-320 (WVIF…TIAL), 338-358 (IFSG…SIVI), and 361-381 (LGLG…LFWL).

It belongs to the major facilitator superfamily. SotB (TC 2.A.1.2) family.

It is found in the cell inner membrane. In terms of biological role, involved in the efflux of sugars. The physiological role may be the reduction of the intracellular concentration of toxic sugars or sugar metabolites. In Helicobacter pylori (strain G27), this protein is Probable sugar efflux transporter.